Consider the following 136-residue polypeptide: Ribonuclease P protein component (136 aa).

Residues 116–136 (RPQRAAAKGSAGTTQKGTPRA) are disordered. Over residues 126 to 136 (AGTTQKGTPRA) the composition is skewed to polar residues.

This sequence belongs to the RnpA family. Consists of a catalytic RNA component (M1 or rnpB) and a protein subunit.

It catalyses the reaction Endonucleolytic cleavage of RNA, removing 5'-extranucleotides from tRNA precursor.. RNaseP catalyzes the removal of the 5'-leader sequence from pre-tRNA to produce the mature 5'-terminus. It can also cleave other RNA substrates such as 4.5S RNA. The protein component plays an auxiliary but essential role in vivo by binding to the 5'-leader sequence and broadening the substrate specificity of the ribozyme. The polypeptide is Ribonuclease P protein component (Pseudarthrobacter chlorophenolicus (strain ATCC 700700 / DSM 12829 / CIP 107037 / JCM 12360 / KCTC 9906 / NCIMB 13794 / A6) (Arthrobacter chlorophenolicus)).